The following is a 134-amino-acid chain: Biopolymer transport protein exbD2 (134 aa).

Residues 1–17 lie on the Cytoplasmic side of the membrane; it reads MRLGRRTSKQEEAQIDL. Residues 18 to 38 form a helical membrane-spanning segment; that stretch reads TSMLDIVFIMLIFFIVTSSFV. Residues 39–134 are Periplasmic-facing; that stretch reads RESGVEVNRP…KSIALAAEKP (96 aa).

Belongs to the ExbD/TolR family. The accessory proteins ExbB and ExbD seem to form a complex with TonB.

It localises to the cell inner membrane. Involved in the TonB-dependent energy-dependent transport of various receptor-bound substrates. The sequence is that of Biopolymer transport protein exbD2 (exbD2) from Vibrio cholerae serotype O1 (strain ATCC 39315 / El Tor Inaba N16961).